Consider the following 121-residue polypeptide: Large ribosomal subunit protein uL18 (121 aa).

Belongs to the universal ribosomal protein uL18 family. Part of the 50S ribosomal subunit; part of the 5S rRNA/L5/L18/L25 subcomplex. Contacts the 5S and 23S rRNAs.

This is one of the proteins that bind and probably mediate the attachment of the 5S RNA into the large ribosomal subunit, where it forms part of the central protuberance. The chain is Large ribosomal subunit protein uL18 from Pelobacter propionicus (strain DSM 2379 / NBRC 103807 / OttBd1).